A 655-amino-acid polypeptide reads, in one-letter code: Sphingomyelin phosphodiesterase 3 (655 aa).

The Cytoplasmic portion of the chain corresponds to Met1 to Asn10. The helical intramembrane region spans Ser11–Val31. Topologically, residues Asp32–Thr64 are cytoplasmic. S-palmitoyl cysteine attachment occurs at residues Cys53, Cys54, and Cys59. Residues Pro65–Trp85 constitute an intramembrane region (helical). The Cytoplasmic segment spans residues Ser86 to Ala655. The residue at position 178 (Ser178) is a Phosphoserine. The disordered stretch occupies residues Val210–Ala319. Composition is skewed to basic and acidic residues over residues Tyr212–Asp222 and Gly248–Glu257. Positions Thr279–Arg299 are enriched in polar residues. The residue at position 291 (Ser291) is a Phosphoserine. Glu364 contacts Mg(2+). Residues Cys397 and Cys398 are each lipidated (S-palmitoyl cysteine). His639 acts as the Proton acceptor in catalysis.

This sequence belongs to the neutral sphingomyelinase family. Mg(2+) is required as a cofactor. Palmitoylated, palmitoylation-deficient proteins are targeted for lysosomal degradation. In terms of tissue distribution, predominantly expressed in brain.

The protein localises to the golgi apparatus membrane. It is found in the cell membrane. The enzyme catalyses a sphingomyelin + H2O = phosphocholine + an N-acylsphing-4-enine + H(+). It carries out the reaction N-(15Z-tetracosenoyl)sphing-4-enine-1-phosphocholine + H2O = N-(15Z-tetracosenoyl)-sphing-4-enine + phosphocholine + H(+). It catalyses the reaction N-(tetracosanoyl)-sphing-4-enine-1-phosphocholine + H2O = N-tetracosanoyl-sphing-4-enine + phosphocholine + H(+). The catalysed reaction is an N-(acyl)-sphingosylphosphocholine + H2O = an N-acyl-sphingoid base + phosphocholine + H(+). The enzyme catalyses 1-hexadecanoyl-sn-glycero-3-phosphocholine + H2O = 1-hexadecanoyl-sn-glycerol + phosphocholine + H(+). It carries out the reaction 1-O-octadecyl-sn-glycero-3-phosphocholine + H2O = 1-O-octadecyl-sn-glycerol + phosphocholine + H(+). It catalyses the reaction a sphingosylphosphocholine + H2O = a sphingoid base + phosphocholine + H(+). The catalysed reaction is N-(hexadecanoyl)-sphing-4-enine-1-phosphocholine + H2O = N-hexadecanoylsphing-4-enine + phosphocholine + H(+). It functions in the pathway lipid metabolism; sphingolipid metabolism. Inhibited by nSMase inhibitor GW4869. Binding of anionic phospholipids (APLs) such as phosphatidylserine (PS) and phosphatidic acid (PA) increases enzymatic activity. Catalyzes the hydrolysis of sphingomyelin to form ceramide and phosphocholine. Ceramide mediates numerous cellular functions, such as apoptosis and growth arrest, and is capable of regulating these 2 cellular events independently. Also hydrolyzes sphingosylphosphocholine. Regulates the cell cycle by acting as a growth suppressor in confluent cells. Probably acts as a regulator of postnatal development and participates in bone and dentin mineralization. Binds to anionic phospholipids (APLs) such as phosphatidylserine (PS) and phosphatidic acid (PA) that modulate enzymatic activity and subcellular location. May be involved in IL-1-beta-induced JNK activation in hepatocytes. May act as a mediator in transcriptional regulation of NOS2/iNOS via the NF-kappa-B activation under inflammatory conditions. The sequence is that of Sphingomyelin phosphodiesterase 3 from Homo sapiens (Human).